An 874-amino-acid chain; its full sequence is Alanine--tRNA ligase (874 aa).

Zn(2+) contacts are provided by histidine 564, histidine 568, cysteine 665, and histidine 669.

This sequence belongs to the class-II aminoacyl-tRNA synthetase family. It depends on Zn(2+) as a cofactor.

It is found in the cytoplasm. The catalysed reaction is tRNA(Ala) + L-alanine + ATP = L-alanyl-tRNA(Ala) + AMP + diphosphate. Its function is as follows. Catalyzes the attachment of alanine to tRNA(Ala) in a two-step reaction: alanine is first activated by ATP to form Ala-AMP and then transferred to the acceptor end of tRNA(Ala). Also edits incorrectly charged Ser-tRNA(Ala) and Gly-tRNA(Ala) via its editing domain. The sequence is that of Alanine--tRNA ligase from Delftia acidovorans (strain DSM 14801 / SPH-1).